The following is a 186-amino-acid chain: Ribosome maturation factor RimM (186 aa).

Positions 93-168 (EDDFYLVDLI…VLIDPPQEEN (76 aa)) constitute a PRC barrel domain. A disordered region spans residues 163-186 (PPQEENAPEFGRNELGHDDGGEAA). Residues 173–186 (GRNELGHDDGGEAA) are compositionally biased toward basic and acidic residues.

Belongs to the RimM family. Binds ribosomal protein uS19.

It is found in the cytoplasm. Its function is as follows. An accessory protein needed during the final step in the assembly of 30S ribosomal subunit, possibly for assembly of the head region. Essential for efficient processing of 16S rRNA. May be needed both before and after RbfA during the maturation of 16S rRNA. It has affinity for free ribosomal 30S subunits but not for 70S ribosomes. In Granulibacter bethesdensis (strain ATCC BAA-1260 / CGDNIH1), this protein is Ribosome maturation factor RimM.